A 476-amino-acid polypeptide reads, in one-letter code: MQISSSSFITKFTNLHMVRSTSDHHQWRHNYNLKQLFIPNLSVSNSQHLPLNQSVAAIVFGGGSDSELYPLTKTRSKGAIPIAANYRLIDAVISNCINSGITKIYAITQFNSTSLNSHLSKAYSGFGLGKDRFVEVIAAYQSLEDQGWFQGTADAIRRCLWVFEEFPVTEFLVLPGHHLYKMDYKMLIEDHRRSRADITIVGLSSVTDHDFGFGFMEVDSTNAVTRFTIKGQQDLISVANRTATRSDGTSSCSVPSAGIYVIGREQMVKLLRECLIKSKDLASEIIPGAISEGMKVKAHMFDGYWEDVRSIGAYYRANMESIKSYRFYDRQCPLYTMPRCLPPSSMSVAVITNSIIGDGCILDKCVIRGSVVGMRTRIADEVIVEDSIIVGSDIYEMEEDVRRKGKEKKIEIRIGIGEKSRIRRAIVDKNARIGKNVMIINRDNVEEGNREAQGYVIREGIIIILRNAVIPNDSIL.

The N-terminal 55 residues, 1-55, are a transit peptide targeting the chloroplast; it reads MQISSSSFITKFTNLHMVRSTSDHHQWRHNYNLKQLFIPNLSVSNSQHLPLNQSV.

It belongs to the bacterial/plant glucose-1-phosphate adenylyltransferase family. Heterotetramer. In terms of tissue distribution, expressed at very low levels in leaves, inflorescences, fruits, and roots.

It localises to the plastid. Its subcellular location is the chloroplast. In Arabidopsis thaliana (Mouse-ear cress), this protein is Inactive glucose-1-phosphate adenylyltransferase small subunit 2, chloroplastic.